The sequence spans 591 residues: Coiled-coil domain-containing protein 148 (591 aa).

Coiled-coil stretches lie at residues 166 to 195 (VKKQLKTVFERLRLEQQRIENDLSDWSIKI), 352 to 417 (MLAK…KKKK), and 466 to 498 (ERRLMEKKEVALQEAHEDKERARRLEALRKQVA).

The polypeptide is Coiled-coil domain-containing protein 148 (CCDC148) (Homo sapiens (Human)).